Here is a 396-residue protein sequence, read N- to C-terminus: Argininosuccinate synthase (396 aa).

An ATP-binding site is contributed by 9–17; sequence AYSGGLDTS. An L-citrulline-binding site is contributed by Tyr-85. Gly-115 is a binding site for ATP. Residues Thr-117, Asn-121, and Asp-122 each coordinate L-aspartate. Position 121 (Asn-121) interacts with L-citrulline. Positions 125, 173, 258, and 270 each coordinate L-citrulline.

This sequence belongs to the argininosuccinate synthase family. Type 1 subfamily. Homotetramer.

The protein localises to the cytoplasm. It catalyses the reaction L-citrulline + L-aspartate + ATP = 2-(N(omega)-L-arginino)succinate + AMP + diphosphate + H(+). It functions in the pathway amino-acid biosynthesis; L-arginine biosynthesis; L-arginine from L-ornithine and carbamoyl phosphate: step 2/3. In Streptococcus agalactiae serotype Ia (strain ATCC 27591 / A909 / CDC SS700), this protein is Argininosuccinate synthase.